Here is a 72-residue protein sequence, read N- to C-terminus: DNA-directed RNA polymerase subunit omega (72 aa).

The protein belongs to the RNA polymerase subunit omega family. As to quaternary structure, the RNAP catalytic core consists of 2 alpha, 1 beta, 1 beta' and 1 omega subunit. When a sigma factor is associated with the core the holoenzyme is formed, which can initiate transcription.

The catalysed reaction is RNA(n) + a ribonucleoside 5'-triphosphate = RNA(n+1) + diphosphate. Its function is as follows. Promotes RNA polymerase assembly. Latches the N- and C-terminal regions of the beta' subunit thereby facilitating its interaction with the beta and alpha subunits. The protein is DNA-directed RNA polymerase subunit omega of Francisella philomiragia subsp. philomiragia (strain ATCC 25017 / CCUG 19701 / FSC 153 / O#319-036).